The sequence spans 116 residues: Type IV narrow pilus major component PilA5 (116 aa).

Residues 1 to 5 constitute a propeptide, leader sequence; it reads MRAKG. Phenylalanine 6 carries the N-methylphenylalanine modification. The chain crosses the membrane as a helical span at residues 6 to 26; sequence FTLIELAIVIVIIGILVAIAV.

Post-translationally, glycosylated.

It is found in the cell inner membrane. The protein resides in the cell outer membrane. It localises to the periplasm. Functionally, plays an essential role in forming the main structure of the narrow T4P pili that participates in twitching motility. The chain is Type IV narrow pilus major component PilA5 (pilA5) from Thermus thermophilus (strain ATCC BAA-163 / DSM 7039 / HB27).